We begin with the raw amino-acid sequence, 353 residues long: Sesquiterpene synthase Agr8 (353 aa).

Residues D82, N220, S224, and E228 each coordinate Mg(2+). Positions 82-86 match the DDXXD motif motif; it reads DEYTD. Residues R309 and Y310 each contribute to the (2E,6E)-farnesyl diphosphate site.

This sequence belongs to the terpene synthase family. It depends on Mg(2+) as a cofactor.

The catalysed reaction is (2E,6E)-farnesyl diphosphate = gamma-muurolene + diphosphate. It catalyses the reaction (2E,6E)-farnesyl diphosphate = alpha-selinene + diphosphate. The enzyme catalyses (2E,6E)-farnesyl diphosphate = delta-cadinene + diphosphate. Terpene cyclase that catalyzes the cyclization of farnesyl diphosphate (FPP) to various sesquiterpenes, including beta-elemene, gamma-muurolene, alpha-selinene, beta-selinene, beta-cadinene, delta-cadinene and alpha-cadinol. This chain is Sesquiterpene synthase Agr8, found in Cyclocybe aegerita (Black poplar mushroom).